The primary structure comprises 632 residues: Golgin subfamily A member 8O (632 aa).

The disordered stretch occupies residues 1-76; sequence MAEETQHNKL…TSSATLKDLE (76 aa). Over residues 38–50 the composition is skewed to polar residues; that stretch reads TNGSIPETATSGG. 2 coiled-coil regions span residues 85–150 and 209–421; these read VLDS…TDLY and ELEQ…SLMA. 3 disordered regions span residues 423-452, 505-524, and 552-612; these read PGEG…DPES, DAAL…DEGE, and NSAD…EHPG. Positions 427–440 are enriched in basic and acidic residues; it reads HGGEHLDSEGEEAP. A compositionally biased stretch (gly residues) spans 508 to 520; that stretch reads LGGGHHQAGAQGG. The segment covering 569 to 578 has biased composition (basic and acidic residues); it reads AADKHGDLRE.

It belongs to the GOLGA6 family.

The chain is Golgin subfamily A member 8O (GOLGA8O) from Homo sapiens (Human).